We begin with the raw amino-acid sequence, 38 residues long: Photosystem II reaction center protein L (38 aa).

The chain crosses the membrane as a helical span at residues serine 17–phenylalanine 37.

The protein belongs to the PsbL family. As to quaternary structure, PSII is composed of 1 copy each of membrane proteins PsbA, PsbB, PsbC, PsbD, PsbE, PsbF, PsbH, PsbI, PsbJ, PsbK, PsbL, PsbM, PsbT, PsbX, PsbY, PsbZ, Psb30/Ycf12, at least 3 peripheral proteins of the oxygen-evolving complex and a large number of cofactors. It forms dimeric complexes.

The protein resides in the plastid. Its subcellular location is the chloroplast thylakoid membrane. One of the components of the core complex of photosystem II (PSII). PSII is a light-driven water:plastoquinone oxidoreductase that uses light energy to abstract electrons from H(2)O, generating O(2) and a proton gradient subsequently used for ATP formation. It consists of a core antenna complex that captures photons, and an electron transfer chain that converts photonic excitation into a charge separation. This subunit is found at the monomer-monomer interface and is required for correct PSII assembly and/or dimerization. The polypeptide is Photosystem II reaction center protein L (Tetradesmus obliquus (Green alga)).